The following is a 102-amino-acid chain: Protein ORF28 (102 aa).

Residues 28-48 (VIGLITVLFLLVIGACVYCCI) form a helical membrane-spanning segment.

It is found in the host membrane. The protein is Protein ORF28 (ORF28) of Homo sapiens (Human).